We begin with the raw amino-acid sequence, 327 residues long: Phenylalanine--tRNA ligase alpha subunit (327 aa).

Glu252 contacts Mg(2+).

The protein belongs to the class-II aminoacyl-tRNA synthetase family. Phe-tRNA synthetase alpha subunit type 1 subfamily. As to quaternary structure, tetramer of two alpha and two beta subunits. Mg(2+) is required as a cofactor.

The protein resides in the cytoplasm. The enzyme catalyses tRNA(Phe) + L-phenylalanine + ATP = L-phenylalanyl-tRNA(Phe) + AMP + diphosphate + H(+). The protein is Phenylalanine--tRNA ligase alpha subunit of Escherichia coli O139:H28 (strain E24377A / ETEC).